A 190-amino-acid chain; its full sequence is MKVGVLSFQGGVIEHLNQIRALGHTGVEVKKEKDLDDIDAIILPGGESTTIGKLLKITGLIKSLKEKIESGLPTWGTCAGMILLANEVEGQEEKYLQLMDIKVKRNAFGTQIDSFKTHKVIEKISKDEMELVFIRAPYITEVKDNVRILCKVDDKIVAARQDNIIVTSFHPELTNDVTFLNYFLKSKWMK.

46-48 (GES) is a binding site for L-glutamine. Cys-78 (nucleophile) is an active-site residue. Residues Arg-105 and 134–135 (IR) each bind L-glutamine. Active-site charge relay system residues include His-170 and Glu-172.

It belongs to the glutaminase PdxT/SNO family. In the presence of PdxS, forms a dodecamer of heterodimers. Only shows activity in the heterodimer.

The enzyme catalyses aldehydo-D-ribose 5-phosphate + D-glyceraldehyde 3-phosphate + L-glutamine = pyridoxal 5'-phosphate + L-glutamate + phosphate + 3 H2O + H(+). The catalysed reaction is L-glutamine + H2O = L-glutamate + NH4(+). It functions in the pathway cofactor biosynthesis; pyridoxal 5'-phosphate biosynthesis. Functionally, catalyzes the hydrolysis of glutamine to glutamate and ammonia as part of the biosynthesis of pyridoxal 5'-phosphate. The resulting ammonia molecule is channeled to the active site of PdxS. The sequence is that of Pyridoxal 5'-phosphate synthase subunit PdxT from Clostridium beijerinckii (strain ATCC 51743 / NCIMB 8052) (Clostridium acetobutylicum).